We begin with the raw amino-acid sequence, 95 residues long: Small ribosomal subunit protein bS18 (95 aa).

The protein belongs to the bacterial ribosomal protein bS18 family. In terms of assembly, part of the 30S ribosomal subunit. Forms a tight heterodimer with protein bS6.

Binds as a heterodimer with protein bS6 to the central domain of the 16S rRNA, where it helps stabilize the platform of the 30S subunit. The polypeptide is Small ribosomal subunit protein bS18 (Rickettsia africae (strain ESF-5)).